The chain runs to 368 residues: tRNA 2-selenouridine synthase (368 aa).

One can recognise a Rhodanese domain in the interval 15 to 138; that stretch reads FLNQHPIMDV…LRQYLIGVIE (124 aa). C98 (S-selanylcysteine intermediate) is an active-site residue.

It belongs to the SelU family. Monomer.

The enzyme catalyses 5-methylaminomethyl-2-thiouridine(34) in tRNA + selenophosphate + (2E)-geranyl diphosphate + H2O + H(+) = 5-methylaminomethyl-2-selenouridine(34) in tRNA + (2E)-thiogeraniol + phosphate + diphosphate. It catalyses the reaction 5-methylaminomethyl-2-thiouridine(34) in tRNA + (2E)-geranyl diphosphate = 5-methylaminomethyl-S-(2E)-geranyl-thiouridine(34) in tRNA + diphosphate. It carries out the reaction 5-methylaminomethyl-S-(2E)-geranyl-thiouridine(34) in tRNA + selenophosphate + H(+) = 5-methylaminomethyl-2-(Se-phospho)selenouridine(34) in tRNA + (2E)-thiogeraniol. The catalysed reaction is 5-methylaminomethyl-2-(Se-phospho)selenouridine(34) in tRNA + H2O = 5-methylaminomethyl-2-selenouridine(34) in tRNA + phosphate. In terms of biological role, involved in the post-transcriptional modification of the uridine at the wobble position (U34) of tRNA(Lys), tRNA(Glu) and tRNA(Gln). Catalyzes the conversion of 2-thiouridine (S2U-RNA) to 2-selenouridine (Se2U-RNA). Acts in a two-step process involving geranylation of 2-thiouridine (S2U) to S-geranyl-2-thiouridine (geS2U) and subsequent selenation of the latter derivative to 2-selenouridine (Se2U) in the tRNA chain. The polypeptide is tRNA 2-selenouridine synthase (Shewanella baltica (strain OS223)).